We begin with the raw amino-acid sequence, 85 residues long: Large ribosomal subunit protein bL31B (85 aa).

It belongs to the bacterial ribosomal protein bL31 family. Type B subfamily. Part of the 50S ribosomal subunit.

In Stutzerimonas stutzeri (strain A1501) (Pseudomonas stutzeri), this protein is Large ribosomal subunit protein bL31B.